Reading from the N-terminus, the 627-residue chain is MAAEKQVPGGGGGGGSGGGGGSGGGGSGGGRGAGGEENKENERPSAGSKANKEFGDSLSLEILQIIKESQQQHGLRHGDFQRYRGYCSRRQRRLRKTLNFKMGNRHKFTGKKVTEELLTDNRYLLLVLMDAERAWSYAMQLKQEANTEPRKRFHLLSRLRKAVKHAEELERLCESNRVDAKTKLEAQAYTAYLSGMLRFEHQEWKAAIEAFNKCKTIYEKLASAFTEEQAVLYNQRVEEISPNIRYCAYNIGDQSAINELMQMRLRSGGTEGLLAEKLEALITQTRAKQAATMSEVEWRGRTVPVKIDKVRIFLLGLADNEAAIVQAESEETKERLFESMLSECRDAIQVVREELKPDQKQRDYILEGEPGKVSNLQYLHSYLTYIKLSTAIKRNENMAKGLQRALLQQQPEDDSKRSPRPQDLIRLYDIILQNLVELLQLPGLEEDKAFQKEIGLKTLVFKAYRCFFIAQSYVLVKKWSEALVLYDRVLKYANEVNSDAGAFKNSLKDLPDVQELITQVRSEKCSLQAAAILDANDAHQTETSSSQVKDNKPLVERFETFCLDPSLVTKQANLVHFPPGFQPIPCKPLFFDLALNHVAFPPLEDKLEQKTKSGLTGYIKGIFGFRS.

The tract at residues 1–53 (MAAEKQVPGGGGGGGSGGGGGSGGGGSGGGRGAGGEENKENERPSAGSKANKE) is disordered. Positions 8 to 33 (PGGGGGGGSGGGGGSGGGGSGGGRGA) are enriched in gly residues. The segment covering 34 to 43 (GGEENKENER) has biased composition (basic and acidic residues). Residues Ser48 and Ser241 each carry the phosphoserine modification. The tract at residues 52–252 (KEFGDSLSLE…NIRYCAYNIG (201 aa)) is RNA-binding. Lys452 is subject to N6-acetyllysine. The segment at 588–610 (PLFFDLALNHVAFPPLEDKLEQK) is required for interaction with SRP72.

This sequence belongs to the SRP68 family. Heterodimer with SRP72. SRP68/SRP72 heterodimer formation is stabilized by the presence of 7SL RNA. Component of a signal recognition particle (SRP) complex that consists of a 7SL RNA molecule of 300 nucleotides and six protein subunits: SRP72, SRP68, SRP54, SRP19, SRP14 and SRP9. Within the SRP complex, interacts (via C-terminus) with SRP72 (via N-terminus).

The protein resides in the cytoplasm. Its subcellular location is the nucleus. The protein localises to the nucleolus. It is found in the endoplasmic reticulum. Component of the signal recognition particle (SRP) complex, a ribonucleoprotein complex that mediates the cotranslational targeting of secretory and membrane proteins to the endoplasmic reticulum (ER). The SRP complex interacts with the signal sequence in nascent secretory and membrane proteins and directs them to the membrane of the ER. The SRP complex targets the ribosome-nascent chain complex to the SRP receptor (SR), which is anchored in the ER, where SR compaction and GTPase rearrangement drive cotranslational protein translocation into the ER. Binds the signal recognition particle RNA (7SL RNA), SRP72 binds to this complex subsequently. The SRP complex possibly participates in the elongation arrest function. The sequence is that of Signal recognition particle subunit SRP68 (SRP68) from Homo sapiens (Human).